Consider the following 219-residue polypeptide: Thiamine-phosphate synthase (219 aa).

Residues 48 to 52 (QFRQK) and Asn-84 each bind 4-amino-2-methyl-5-(diphosphooxymethyl)pyrimidine. Residues Asp-85 and Asp-104 each coordinate Mg(2+). A 4-amino-2-methyl-5-(diphosphooxymethyl)pyrimidine-binding site is contributed by Ser-123. 150-152 (TQS) contributes to the 2-[(2R,5Z)-2-carboxy-4-methylthiazol-5(2H)-ylidene]ethyl phosphate binding site. Residue Lys-153 coordinates 4-amino-2-methyl-5-(diphosphooxymethyl)pyrimidine. Residues Gly-181 and 199 to 200 (IS) each bind 2-[(2R,5Z)-2-carboxy-4-methylthiazol-5(2H)-ylidene]ethyl phosphate.

This sequence belongs to the thiamine-phosphate synthase family. Mg(2+) is required as a cofactor.

The catalysed reaction is 2-[(2R,5Z)-2-carboxy-4-methylthiazol-5(2H)-ylidene]ethyl phosphate + 4-amino-2-methyl-5-(diphosphooxymethyl)pyrimidine + 2 H(+) = thiamine phosphate + CO2 + diphosphate. It carries out the reaction 2-(2-carboxy-4-methylthiazol-5-yl)ethyl phosphate + 4-amino-2-methyl-5-(diphosphooxymethyl)pyrimidine + 2 H(+) = thiamine phosphate + CO2 + diphosphate. It catalyses the reaction 4-methyl-5-(2-phosphooxyethyl)-thiazole + 4-amino-2-methyl-5-(diphosphooxymethyl)pyrimidine + H(+) = thiamine phosphate + diphosphate. The protein operates within cofactor biosynthesis; thiamine diphosphate biosynthesis; thiamine phosphate from 4-amino-2-methyl-5-diphosphomethylpyrimidine and 4-methyl-5-(2-phosphoethyl)-thiazole: step 1/1. In terms of biological role, condenses 4-methyl-5-(beta-hydroxyethyl)thiazole monophosphate (THZ-P) and 2-methyl-4-amino-5-hydroxymethyl pyrimidine pyrophosphate (HMP-PP) to form thiamine monophosphate (TMP). The polypeptide is Thiamine-phosphate synthase (Helicobacter pylori (strain Shi470)).